We begin with the raw amino-acid sequence, 670 residues long: Aurofusarin cluster transcription factor aurR2 (670 aa).

Positions 12 to 38 (CVPCQHRKIRCNGQTPCAYCIRTGKEC) form a DNA-binding region, zn(2)-C6 fungal-type. 2 disordered regions span residues 57 to 76 (RLTA…IVSG) and 92 to 115 (GDEM…RTDT). Over residues 92-113 (GDEMQGKDVSPDPERPPLRTRT) the composition is skewed to basic and acidic residues.

The protein resides in the nucleus. Transcription factor that may participate in the regulation of the expression of the gene cluster that mediates the biosynthesis of aurofusarin, a red mycelium pigment which is acting as a mycotoxin. The protein is Aurofusarin cluster transcription factor aurR2 of Gibberella zeae (strain ATCC MYA-4620 / CBS 123657 / FGSC 9075 / NRRL 31084 / PH-1) (Wheat head blight fungus).